Here is a 618-residue protein sequence, read N- to C-terminus: Probable protein disulfide-isomerase A4 (618 aa).

A signal peptide spans 1–21 (MMFDRRFFALVVLLCVSAVRS). Thioredoxin domains are found at residues 22 to 139 (TEDA…SRVD), 138 to 254 (VDPN…DQSK), and 480 to 609 (SSGK…KHGV). Disulfide bonds link cysteine 65/cysteine 68, cysteine 176/cysteine 179, and cysteine 529/cysteine 532. The short motif at 615-618 (KDEL) is the Prevents secretion from ER element.

This sequence belongs to the protein disulfide isomerase family.

It localises to the endoplasmic reticulum lumen. It carries out the reaction Catalyzes the rearrangement of -S-S- bonds in proteins.. This is Probable protein disulfide-isomerase A4 from Caenorhabditis elegans.